Consider the following 382-residue polypeptide: Succinate--CoA ligase [ADP-forming] subunit beta (382 aa).

The region spanning 9 to 237 is the ATP-grasp domain; the sequence is RDLLARYGIP…PSAEPEAERR (229 aa). ATP contacts are provided by residues lysine 45, 52–54, isoleucine 94, and glutamate 99; that span reads GRG. Residues asparagine 192 and aspartate 206 each contribute to the Mg(2+) site. Residues asparagine 257 and 314 to 316 each bind substrate; that span reads GIT.

Belongs to the succinate/malate CoA ligase beta subunit family. Heterotetramer of two alpha and two beta subunits. Requires Mg(2+) as cofactor.

The catalysed reaction is succinate + ATP + CoA = succinyl-CoA + ADP + phosphate. It catalyses the reaction GTP + succinate + CoA = succinyl-CoA + GDP + phosphate. It functions in the pathway carbohydrate metabolism; tricarboxylic acid cycle; succinate from succinyl-CoA (ligase route): step 1/1. Functionally, succinyl-CoA synthetase functions in the citric acid cycle (TCA), coupling the hydrolysis of succinyl-CoA to the synthesis of either ATP or GTP and thus represents the only step of substrate-level phosphorylation in the TCA. The beta subunit provides nucleotide specificity of the enzyme and binds the substrate succinate, while the binding sites for coenzyme A and phosphate are found in the alpha subunit. This Chloroflexus aggregans (strain MD-66 / DSM 9485) protein is Succinate--CoA ligase [ADP-forming] subunit beta.